Here is a 362-residue protein sequence, read N- to C-terminus: Phosphoserine aminotransferase (362 aa).

Arginine 42 is a binding site for L-glutamate. The pyridoxal 5'-phosphate site is built by tryptophan 102, threonine 154, aspartate 174, and glutamine 197. An N6-(pyridoxal phosphate)lysine modification is found at lysine 198. 239–240 (NT) provides a ligand contact to pyridoxal 5'-phosphate.

Belongs to the class-V pyridoxal-phosphate-dependent aminotransferase family. SerC subfamily. In terms of assembly, homodimer. It depends on pyridoxal 5'-phosphate as a cofactor.

It localises to the cytoplasm. It catalyses the reaction O-phospho-L-serine + 2-oxoglutarate = 3-phosphooxypyruvate + L-glutamate. It carries out the reaction 4-(phosphooxy)-L-threonine + 2-oxoglutarate = (R)-3-hydroxy-2-oxo-4-phosphooxybutanoate + L-glutamate. It functions in the pathway amino-acid biosynthesis; L-serine biosynthesis; L-serine from 3-phospho-D-glycerate: step 2/3. It participates in cofactor biosynthesis; pyridoxine 5'-phosphate biosynthesis; pyridoxine 5'-phosphate from D-erythrose 4-phosphate: step 3/5. Its function is as follows. Catalyzes the reversible conversion of 3-phosphohydroxypyruvate to phosphoserine and of 3-hydroxy-2-oxo-4-phosphonooxybutanoate to phosphohydroxythreonine. This is Phosphoserine aminotransferase from Haemophilus ducreyi (strain 35000HP / ATCC 700724).